The primary structure comprises 349 residues: Insulin gene enhancer protein ISL-1 (349 aa).

2 LIM zinc-binding domains span residues 17 to 70 and 79 to 133; these read CVGC…CKRD and CAKC…RADH. The segment at residues 181–240 is a DNA-binding region (homeobox); the sequence is TTRVRTVLNEKQLHTLRTCYAANPRPDALMKEQLVEMTGLSPRVIRVWFQNKRCKDKKRS. An LIM-binding domain (LID) region spans residues 262–291; the sequence is GTPMVAASPERHDGGLQANPVEVQSYQPPW. Positions 312 to 349 are disordered; it reads VNFSEGGPGSNSTGSEVASMSSQLPDTPNSMVASPIEA. The segment covering 321 to 343 has biased composition (polar residues); it reads SNSTGSEVASMSSQLPDTPNSMV.

As to quaternary structure, at neuronal promoters, displaces LDB1 from LHX3 LIM domain to form a ternary complex in which ISL1 contacts both LHX3 and LDB1; allosteric structural changes in the DNA binding domain of LHX3, induced by the ISL1:LHX3 interaction, may explain differences in sequence specificity of the different complexes. Interacts with LHX3. Interacts (via C-terminus) with POU4F2 (via C-terminus) isoform 1. Interacts with POU3F2. Interacts with POU4F3. Interacts (via N-terminal domain) with MLIP; the interaction represses ISL1 transactivator activity. Interacts with GCN5/KAT2A. Interactions of ISL1 with MLIP1 or KAT2A may be mutually exclusive. Ubiquitinated probably by WWP1 E3 ubiquitin ligase; ubiquitination is followed by protein degradation. In terms of processing, phosphorylated. Expressed in subsets of neurons of the adrenal medulla and dorsal root ganglion, inner nuclear and ganglion cell layers in the retina, the pineal and some regions of the brain.

It localises to the nucleus. In terms of biological role, DNA-binding transcriptional activator. Recognizes and binds to the consensus octamer binding site 5'-ATAATTAA-3' in promoter of target genes. Plays a fundamental role in the gene regulatory network essential for retinal ganglion cell (RGC) differentiation. Cooperates with the transcription factor POU4F2 to achieve maximal levels of expression of RGC target genes and RGC fate specification in the developing retina. Involved in the specification of motor neurons in cooperation with LHX3 and LDB1. Binds to insulin gene enhancer sequences. Essential for heart development. Marker of one progenitor cell population that give rise to the outflow tract, right ventricle, a subset of left ventricular cells, and a large number of atrial cells as well, its function is required for these progenitors to contribute to the heart. Controls the expression of FGF and BMP growth factors in this cell population and is required for proliferation and survival of cells within pharyngeal foregut endoderm and adjacent splanchnic mesoderm as well as for migration of cardiac progenitors into the heart. The sequence is that of Insulin gene enhancer protein ISL-1 (ISL1) from Homo sapiens (Human).